Here is a 79-residue protein sequence, read N- to C-terminus: UPF0154 protein lwe1321 (79 aa).

A helical membrane pass occupies residues 2 to 22; sequence WIYILVGIICLLAGLAGGFFI. Residues 57 to 66 show a composition bias toward polar residues; it reads KINQMMSAMN. Residues 57 to 79 are disordered; sequence KINQMMSAMNKQQEKEKPKKAKK.

The protein belongs to the UPF0154 family.

It is found in the cell membrane. This chain is UPF0154 protein lwe1321, found in Listeria welshimeri serovar 6b (strain ATCC 35897 / DSM 20650 / CCUG 15529 / CIP 8149 / NCTC 11857 / SLCC 5334 / V8).